Reading from the N-terminus, the 308-residue chain is Ferrochelatase (308 aa).

Residues His-167 and Glu-239 each coordinate Fe cation.

This sequence belongs to the ferrochelatase family.

The protein localises to the cytoplasm. It catalyses the reaction heme b + 2 H(+) = protoporphyrin IX + Fe(2+). The protein operates within porphyrin-containing compound metabolism; protoheme biosynthesis; protoheme from protoporphyrin-IX: step 1/1. Its function is as follows. Catalyzes the ferrous insertion into protoporphyrin IX. The protein is Ferrochelatase of Thermoplasma acidophilum (strain ATCC 25905 / DSM 1728 / JCM 9062 / NBRC 15155 / AMRC-C165).